The primary structure comprises 159 residues: Ribosomal RNA large subunit methyltransferase H (159 aa).

S-adenosyl-L-methionine contacts are provided by Leu76 and Gly108.

The protein belongs to the RNA methyltransferase RlmH family. Homodimer.

The protein resides in the cytoplasm. It carries out the reaction pseudouridine(1915) in 23S rRNA + S-adenosyl-L-methionine = N(3)-methylpseudouridine(1915) in 23S rRNA + S-adenosyl-L-homocysteine + H(+). Functionally, specifically methylates the pseudouridine at position 1915 (m3Psi1915) in 23S rRNA. This Lactiplantibacillus plantarum (strain ATCC BAA-793 / NCIMB 8826 / WCFS1) (Lactobacillus plantarum) protein is Ribosomal RNA large subunit methyltransferase H.